A 95-amino-acid chain; its full sequence is 1,2-phenylacetyl-CoA epoxidase, subunit B (95 aa).

In terms of assembly, homotrimer. Forms a stable heterodimer with PaaC. Probably forms an oligomer with PaaAC.

Its pathway is aromatic compound metabolism; phenylacetate degradation. Component of 1,2-phenylacetyl-CoA epoxidase multicomponent enzyme system which catalyzes the reduction of phenylacetyl-CoA (PA-CoA) to form 1,2-epoxyphenylacetyl-CoA. The subunit B may play a regulatory role or be directly involved in electron transport. This Escherichia coli (strain K12) protein is 1,2-phenylacetyl-CoA epoxidase, subunit B (paaB).